We begin with the raw amino-acid sequence, 440 residues long: COP9 signalosome complex subunit 4 (440 aa).

Residues 216 to 386 enclose the PCI domain; it reads SNRQFLAASQ…RIIYFESGLE (171 aa).

The protein belongs to the CSN4 family. Component of the COP9 signalosome (CSN) complex.

It localises to the cytoplasm. It is found in the nucleus. Component of the COP9 signalosome (CSN) complex that acts as an regulator of the ubiquitin (Ubl) conjugation pathway by mediating the deneddylation of the cullin subunit of SCF-type E3 ubiquitin-protein ligase complexes. The CSN complex is involved in the regulation of the circadian clock through its control of the stability of the SCF(FWD1) complex. The protein is COP9 signalosome complex subunit 4 (csn-4) of Neurospora crassa (strain ATCC 24698 / 74-OR23-1A / CBS 708.71 / DSM 1257 / FGSC 987).